We begin with the raw amino-acid sequence, 474 residues long: F420-non-reducing hydrogenase vhc subunit A (474 aa).

Residues cysteine 61, cysteine 64, cysteine 445, and cysteine 448 each contribute to the Ni(2+) site.

This sequence belongs to the [NiFe]/[NiFeSe] hydrogenase large subunit family. As to quaternary structure, the F420-non-reducing hydrogenase vhc is composed of three subunits; VhcA, VhcD and VhcG. It depends on Ni(2+) as a cofactor.

In Methanococcus voltae, this protein is F420-non-reducing hydrogenase vhc subunit A (vhcA).